The following is a 91-amino-acid chain: Bacterial microcompartment shell protein PduJ (91 aa).

The region spanning 4 to 88 (ALGLVETKGL…PHSDVEAILP (85 aa)) is the BMC domain.

Belongs to the bacterial microcompartments protein family. Homohexamer with a central pore. Interacts with PduP, which targets PduP to the BMC. Interacts with shell protein PduA.

It is found in the bacterial microcompartment. It participates in polyol metabolism; 1,2-propanediol degradation. Its function is as follows. One of the major shell proteins of the bacterial microcompartment (BMC) dedicated to 1,2-propanediol (1,2-PD) degradation. At least one of PduA or PduJ is required for BMC assembly; it must be encoded as the first gene in the pdu operon. Required for structural integrity of BMCs and to mitigate propionaldehyde toxicity, probably joins facets responsible for BMC closure. Probably the hub for binding multiple enzymes to the interior of the BMC. In terms of biological role, expression of a cosmid containing the full 21-gene pdu operon in E.coli allows E.coli to grow on 1,2-PD with the appearance of BMCs in its cytoplasm. Overexpression of this protein leads to an internal structure with a whorled architecture. Functionally, the 1,2-PD-specific bacterial microcompartment (BMC) concentrates low levels of 1,2-PD catabolic enzymes, concentrates volatile reaction intermediates thus enhancing pathway flux and keeps the level of toxic, mutagenic propionaldehyde low. In Citrobacter freundii, this protein is Bacterial microcompartment shell protein PduJ.